Consider the following 86-residue polypeptide: Haditoxin (86 aa).

The N-terminal stretch at 1–21 (MKTLLLTLVVVTIVYLDLGYT) is a signal peptide. Cystine bridges form between cysteine 24–cysteine 45, cysteine 38–cysteine 62, cysteine 66–cysteine 78, and cysteine 79–cysteine 84.

Belongs to the three-finger toxin family. Short-chain subfamily. Orphan group VIII (haditoxin) sub-subfamily. As to quaternary structure, homodimer; non-covalently linked. Expressed by the venom gland.

The protein localises to the secreted. Functionally, antagonist of muscle (alpha-1-beta-1-delta-epsilon/CHRNA1-CHRNB1-CHRND-CHRNE) and neuronal (alpha-7/CHRNA7, alpha-3-beta-2/CHRNA3-CHRNB2, alpha-4-beta-2/CHRNA4-CHRNB2) nicotinic acetylcholine receptors (nAChR). The highest affinity is for human alpha-7/CHRNA7 nAChRs (IC(50)=180 nM), compared to human alpha-1-beta-1-delta-epsilon/CHRNA1-CHRNB1-CHRND-CHRNE nAChR (IC(50)= 550 nM), alpha-3-beta-2/CHRNA3-CHRNB2 nAChR (IC(50)=500 nM), and alpha-4-beta-2/CHRNA4-CHRNB2 nAChR (IC(50)=2.6 uM). The sequence is that of Haditoxin from Ophiophagus hannah (King cobra).